The primary structure comprises 250 residues: uncharacterized protein (250 aa).

7 consecutive transmembrane segments (helical) span residues 36–56 (VALGLVVSGALAYATSSVPAV), 73–93 (PLYMVVAFAPLVLMLIAGFAM), 101–121 (AGALYWTIVSLIGASLGSVML), 128–148 (VAATFFVTATAFGGLSLFGYT), 156–176 (FGSFLMMGVIGLIVASIVSIF), 180–200 (PALLFAINVLGVLIFSGLIAY), and 225–245 (FGALSLYINFINLFQFLLSFF).

It belongs to the BI1 family.

The protein resides in the cell membrane. This is an uncharacterized protein from Caulobacter vibrioides (strain ATCC 19089 / CIP 103742 / CB 15) (Caulobacter crescentus).